Consider the following 440-residue polypeptide: Golgi-associated RAB2 interactor protein 2 (440 aa).

This sequence belongs to the GARIN family. As to quaternary structure, interacts with CALM1. As to expression, expressed in testis (at protein level).

It is found in the cell projection. The protein localises to the cilium. It localises to the flagellum. In terms of biological role, seems to play a role in sperm motility. This Mus musculus (Mouse) protein is Golgi-associated RAB2 interactor protein 2.